The sequence spans 346 residues: 4-amino-5-hydroxymethyl-2-methylpyrimidine phosphate synthase (346 aa).

Lys-62 is modified (N6-(pyridoxal phosphate)lysine). Residue His-66 is part of the active site. 114–117 (GEFG) is a binding site for pyridoxal 5'-phosphate. Positions 194-198 (CCCFC) match the CCCFC; essential for catalytic activity, may be the site of iron coordination motif.

Belongs to the NMT1/THI5 family. In terms of assembly, homodimer. Requires Fe cation as cofactor.

Its subcellular location is the cytoplasm. It is found in the nucleus. It carries out the reaction N(6)-(pyridoxal phosphate)-L-lysyl-[4-amino-5-hydroxymethyl-2-methylpyrimidine phosphate synthase] + L-histidyl-[4-amino-5-hydroxymethyl-2-methylpyrimidine phosphate synthase] + 2 Fe(3+) + 4 H2O = L-lysyl-[4-amino-5-hydroxymethyl-2-methylpyrimidine phosphate synthase] + (2S)-2-amino-5-hydroxy-4-oxopentanoyl-[4-amino-5-hydroxymethyl-2-methylpyrimidine phosphate synthase] + 4-amino-2-methyl-5-(phosphooxymethyl)pyrimidine + 3-oxopropanoate + 2 Fe(2+) + 2 H(+). It participates in cofactor biosynthesis; thiamine diphosphate biosynthesis. Functionally, responsible for the formation of the pyrimidine heterocycle in the thiamine biosynthesis pathway. Catalyzes the formation of hydroxymethylpyrimidine phosphate (HMP-P) from histidine and pyridoxal phosphate (PLP). The protein uses PLP and the active site histidine to form HMP-P, generating an inactive enzyme. The enzyme can only undergo a single turnover, which suggests it is a suicide enzyme. This Schizosaccharomyces pombe (strain 972 / ATCC 24843) (Fission yeast) protein is 4-amino-5-hydroxymethyl-2-methylpyrimidine phosphate synthase.